Here is a 1219-residue protein sequence, read N- to C-terminus: Pheromone-regulated membrane protein 10 (1219 aa).

Residues 1–11 (MMRTQSDEHVA) show a composition bias toward basic and acidic residues. Disordered stretches follow at residues 1–273 (MMRT…IERE), 303–490 (LASF…DPFT), 503–533 (HDDD…EDYV), and 555–713 (EGNK…RPVK). Residues 42–53 (DENDDGHDDSDE) are compositionally biased toward acidic residues. Residues 57–68 (SVVIPTPSVVIV) are compositionally biased toward low complexity. The span at 104–115 (LKSPGTPTTYSP) shows a compositional bias: polar residues. Residues 136–155 (GSSLSSTTLMNTLLNSSGLG) are compositionally biased toward low complexity. 2 stretches are compositionally biased toward acidic residues: residues 159–171 (TESE…DEEV) and 219–231 (QEEE…DDDG). 3 stretches are compositionally biased toward basic and acidic residues: residues 259–273 (ADRA…IERE), 330–346 (DDQR…RREN), and 395–421 (LDRR…EKER). The segment covering 422 to 432 (QHHHHNHHHHH) has biased composition (basic residues). The segment covering 435–446 (ETGPNTGASSPF) has biased composition (polar residues). The span at 448–470 (EEEKDREAEEAEILRDQARDLVN) shows a compositional bias: basic and acidic residues. The segment covering 565-577 (TTVGDGTSTGDVS) has biased composition (low complexity). The span at 598–615 (KSKTKTTQKLGLKKKKKE) shows a compositional bias: basic residues. Residues 616–641 (LLKIIEDQRKEKEENKKRPKWYDKSR) are compositionally biased toward basic and acidic residues. A compositionally biased stretch (low complexity) spans 642-652 (STSPSPGGTPA). Residues 653–673 (PHHHHHIPGLHLHHHTKGHQR) show a composition bias toward basic residues. Residues 693 to 713 (GGDKPPDRPRSLRSEALRPVK) are compositionally biased toward basic and acidic residues. 10 consecutive transmembrane segments (helical) span residues 864-884 (PPWL…PYAF), 888-908 (WADI…QIIV), 918-938 (VFEV…GTIS), 945-965 (FCFA…YIVL), 983-1003 (MFYA…GAVV), 1021-1041 (LDPL…ALVN), 1049-1069 (PSML…GANI), 1075-1095 (SSYL…NLYS), 1100-1120 (GLAF…GVAS), and 1184-1204 (LGFT…AATL).

It belongs to the ThrE exporter (TC 2.A.79) family.

It is found in the membrane. The polypeptide is Pheromone-regulated membrane protein 10 (Yarrowia lipolytica (strain CLIB 122 / E 150) (Yeast)).